Here is a 46-residue protein sequence, read N- to C-terminus: Cytochrome b559 subunit beta (46 aa).

The helical transmembrane segment at 21–37 (WLALHTLGIPTVFFLGA) threads the bilayer. Residue H25 coordinates heme.

It belongs to the PsbE/PsbF family. In terms of assembly, heterodimer of an alpha subunit and a beta subunit. PSII is composed of 1 copy each of membrane proteins PsbA, PsbB, PsbC, PsbD, PsbE, PsbF, PsbH, PsbI, PsbJ, PsbK, PsbL, PsbM, PsbT, PsbX, PsbY, PsbZ, Psb30/Ycf12, peripheral proteins PsbO, CyanoQ (PsbQ), PsbU, PsbV and a large number of cofactors. It forms dimeric complexes. Heme b is required as a cofactor.

It localises to the cellular thylakoid membrane. In terms of biological role, this b-type cytochrome is tightly associated with the reaction center of photosystem II (PSII). PSII is a light-driven water:plastoquinone oxidoreductase that uses light energy to abstract electrons from H(2)O, generating O(2) and a proton gradient subsequently used for ATP formation. It consists of a core antenna complex that captures photons, and an electron transfer chain that converts photonic excitation into a charge separation. In Synechococcus sp. (strain CC9605), this protein is Cytochrome b559 subunit beta.